The following is a 719-amino-acid chain: Leucine-rich repeat and fibronectin type-III domain-containing protein 5 (719 aa).

The N-terminal stretch at 1 to 17 (MEKILFYLFLIGIAVKA) is a signal peptide. The LRRNT domain occupies 18 to 51 (QICPKRCVCQILSPNLATLCAKKGLLFVPPNIDR). Residues 18–529 (QICPKRCVCQ…MQSQFLGGTM (512 aa)) lie on the Extracellular side of the membrane. LRR repeat units follow at residues 52–73 (RTVE…DFAN), 76–97 (SLVD…AFAD), 100–121 (NLRA…MFSG), 124–145 (NLHH…AFDD), 148–169 (ALEE…AVEK), 172–193 (SLHT…TFSH), and 196–217 (KMTR…PLFQ). Asn73 is a glycosylation site (N-linked (GlcNAc...) asparagine). The LRRCT domain maps to 240–286 (NPLHCNCELLWLRRLSREDDLETCASPPLLTGRYFWSIPEEEFLCEP). The Ig-like domain maps to 287–373 (PLITRHTHEM…GEATQIVDLH (87 aa)). An intrachain disulfide couples Cys308 to Cys357. N-linked (GlcNAc...) asparagine glycans are attached at residues Asn330, Asn339, Asn382, Asn406, and Asn452. Positions 385–414 (NHIHEPDPGSSDISTSTKSGSNTSSSNGDT) are disordered. Positions 393-414 (GSSDISTSTKSGSNTSSSNGDT) are enriched in low complexity. One can recognise a Fibronectin type-III domain in the interval 414–503 (TKLSQDKIVV…ITSLTATRVV (90 aa)). Residues 530-550 (IIIIGGIIVASVLVFIIILMI) traverse the membrane as a helical segment. Residues 551–719 (RYKVCNNNGQ…VQETQRLELI (169 aa)) lie on the Cytoplasmic side of the membrane. Low complexity predominate over residues 615–627 (ETCSSQDSSTTTS). The interval 615 to 694 (ETCSSQDSST…SVTEGPTSKR (80 aa)) is disordered. 2 stretches are compositionally biased toward polar residues: residues 628-641 (ALPP…SVSQ) and 649-677 (TKPS…TALQ).

It belongs to the LRFN family. In terms of assembly, can form heteromeric complexes with LRFN1, LRFN2, LRFN3 and LFRN4. Able to form homomeric complexes across cell junctions, between adjacent cells. Does not interact with DLG1, DLG2, DLG3 and DLG4.

It localises to the membrane. Its function is as follows. Cell adhesion molecule that mediates homophilic cell-cell adhesion in a Ca(2+)-independent manner. Promotes neurite outgrowth in hippocampal neurons. The sequence is that of Leucine-rich repeat and fibronectin type-III domain-containing protein 5 (LRFN5) from Homo sapiens (Human).